Here is a 565-residue protein sequence, read N- to C-terminus: Berberine bridge enzyme-like C-2 (565 aa).

A signal peptide spans 1–17 (MFPIIILISFSFTFLFA). Residues N28 and N40 are each glycosylated (N-linked (GlcNAc...) asparagine). C32 and C94 are oxidised to a cystine. In terms of domain architecture, FAD-binding PCMH-type spans 72–248 (YMPKPTVIIL…YAWKIRLLKV (177 aa)). H109 is modified (pros-8alpha-FAD histidine). Residues N363 and N502 are each glycosylated (N-linked (GlcNAc...) asparagine).

It belongs to the oxygen-dependent FAD-linked oxidoreductase family. Requires FAD as cofactor.

The protein resides in the vacuole. Its pathway is alkaloid biosynthesis; nicotine biosynthesis. Involved in the biosynthesis of pyridine alkaloid natural products, leading mainly to the production of anabasine, anatabine, nicotine and nornicotine, effective deterrents against herbivores with antiparasitic and pesticide properties (neurotoxins); nornicotine serves as the precursor in the synthesis of the carcinogen compound N'-nitrosonornicotine (NNN). Catalyzes a late oxidation step subsequent to the pyridine ring condensation reaction in the biosynthesis of alkaloids. This chain is Berberine bridge enzyme-like C-2, found in Nicotiana tabacum (Common tobacco).